Consider the following 414-residue polypeptide: NADH kinase POS5, mitochondrial (414 aa).

This sequence belongs to the NAD kinase family.

The protein resides in the mitochondrion matrix. It carries out the reaction NADH + ATP = ADP + NADPH + H(+). In terms of biological role, phosphorylates both NADH and NAD(+), with a twofold preference for NADH. Anti-oxidant factor and key source of the cellular reductant NADPH. The chain is NADH kinase POS5, mitochondrial (POS5) from Saccharomyces cerevisiae (strain ATCC 204508 / S288c) (Baker's yeast).